The primary structure comprises 479 residues: U2 small nuclear ribonucleoprotein auxiliary factor 35 kDa subunit-related protein 1 (479 aa).

Residues methionine 1–leucine 63 are disordered. Residues serine 20–arginine 37 show a composition bias toward basic residues. Residues glutamine 50–leucine 63 show a composition bias toward acidic residues. Residue lysine 67 forms a Glycyl lysine isopeptide (Lys-Gly) (interchain with G-Cter in SUMO2) linkage. The C3H1-type 1 zinc finger occupies glutamate 171–proline 199. The region spanning proline 203–valine 309 is the RRM domain. The C3H1-type 2 zinc finger occupies arginine 311–arginine 338. Residue serine 354 is modified to Phosphoserine. Positions aspartate 356–lysine 479 are disordered. Basic and acidic residues-rich tracts occupy residues asparagine 365 to tyrosine 379 and proline 388 to lysine 403. Residue serine 389 is modified to Phosphoserine. Composition is skewed to basic residues over residues lysine 404–serine 417 and serine 442–arginine 451.

The protein localises to the nucleus. The polypeptide is U2 small nuclear ribonucleoprotein auxiliary factor 35 kDa subunit-related protein 1 (Homo sapiens (Human)).